The chain runs to 123 residues: uncharacterized protein (123 aa).

Positions 1 to 28 are disordered; the sequence is MGLGSSKRKEEPPHKSEPKTVGRVKRAG. Positions 7–20 are enriched in basic and acidic residues; it reads KRKEEPPHKSEPKT.

This sequence belongs to the TUSC2 family.

This is an uncharacterized protein from Caenorhabditis elegans.